Consider the following 1038-residue polypeptide: Translation initiation factor IF-2 (1038 aa).

Residues 32–442 are disordered; that stretch reads GSALASLSDE…RKGVNTAAPR (411 aa). Composition is skewed to low complexity over residues 65–77, 100–113, and 131–147; these read PPTK…PVAP, PAEA…PAQP, and PKLA…APAA. Composition is skewed to basic and acidic residues over residues 204-217 and 275-295; these read SGGR…KRES and RSLD…DAGK. Positions 311 to 328 are enriched in low complexity; the sequence is PSAPAKPAAPTGSSGPAA. The segment covering 331–344 has biased composition (basic and acidic residues); that stretch reads PDIKLTRDVIEGHK. Residues 422–435 show a composition bias toward basic residues; the sequence is HHYRRSRPRIRRKG. The 168-residue stretch at 529–696 folds into the tr-type G domain; the sequence is ARPPVVTFLG…TLLTIAELNE (168 aa). Residues 538-545 form a G1 region; it reads GHVDHGKT. 538 to 545 lines the GTP pocket; it reads GHVDHGKT. The tract at residues 563 to 567 is G2; sequence GITQH. Residues 584–587 form a G3 region; the sequence is DTPG. Residues 584–588 and 638–641 each bind GTP; these read DTPGH and NKID. Positions 638-641 are G4; sequence NKID. Positions 674–676 are G5; it reads SAT.

It belongs to the TRAFAC class translation factor GTPase superfamily. Classic translation factor GTPase family. IF-2 subfamily.

It localises to the cytoplasm. Its function is as follows. One of the essential components for the initiation of protein synthesis. Protects formylmethionyl-tRNA from spontaneous hydrolysis and promotes its binding to the 30S ribosomal subunits. Also involved in the hydrolysis of GTP during the formation of the 70S ribosomal complex. This is Translation initiation factor IF-2 from Rhodopirellula baltica (strain DSM 10527 / NCIMB 13988 / SH1).